The sequence spans 181 residues: ATP-dependent protease subunit HslV (181 aa).

T6 is a catalytic residue. Residues G162, C165, and T168 each coordinate Na(+).

It belongs to the peptidase T1B family. HslV subfamily. A double ring-shaped homohexamer of HslV is capped on each side by a ring-shaped HslU homohexamer. The assembly of the HslU/HslV complex is dependent on binding of ATP.

The protein localises to the cytoplasm. The catalysed reaction is ATP-dependent cleavage of peptide bonds with broad specificity.. Allosterically activated by HslU binding. Its function is as follows. Protease subunit of a proteasome-like degradation complex believed to be a general protein degrading machinery. The polypeptide is ATP-dependent protease subunit HslV (Nitratidesulfovibrio vulgaris (strain ATCC 29579 / DSM 644 / CCUG 34227 / NCIMB 8303 / VKM B-1760 / Hildenborough) (Desulfovibrio vulgaris)).